We begin with the raw amino-acid sequence, 482 residues long: UDP-N-acetylmuramate--L-alanine ligase (482 aa).

Position 129–135 (129–135 (GTHGKTT)) interacts with ATP.

It belongs to the MurCDEF family.

It localises to the cytoplasm. The enzyme catalyses UDP-N-acetyl-alpha-D-muramate + L-alanine + ATP = UDP-N-acetyl-alpha-D-muramoyl-L-alanine + ADP + phosphate + H(+). It functions in the pathway cell wall biogenesis; peptidoglycan biosynthesis. Its function is as follows. Cell wall formation. The chain is UDP-N-acetylmuramate--L-alanine ligase from Acinetobacter baylyi (strain ATCC 33305 / BD413 / ADP1).